The chain runs to 314 residues: tRNA-cytidine(32) 2-sulfurtransferase (314 aa).

Positions 49–54 (SGGKDS) match the PP-loop motif motif. Residues Cys124, Cys127, and Cys215 each contribute to the [4Fe-4S] cluster site.

It belongs to the TtcA family. Homodimer. It depends on Mg(2+) as a cofactor. [4Fe-4S] cluster is required as a cofactor.

It is found in the cytoplasm. It catalyses the reaction cytidine(32) in tRNA + S-sulfanyl-L-cysteinyl-[cysteine desulfurase] + AH2 + ATP = 2-thiocytidine(32) in tRNA + L-cysteinyl-[cysteine desulfurase] + A + AMP + diphosphate + H(+). Its pathway is tRNA modification. Its function is as follows. Catalyzes the ATP-dependent 2-thiolation of cytidine in position 32 of tRNA, to form 2-thiocytidine (s(2)C32). The sulfur atoms are provided by the cysteine/cysteine desulfurase (IscS) system. The chain is tRNA-cytidine(32) 2-sulfurtransferase from Histophilus somni (strain 129Pt) (Haemophilus somnus).